A 255-amino-acid polypeptide reads, in one-letter code: Methylthioribulose-1-phosphate dehydratase (255 aa).

Cys111 provides a ligand contact to substrate. Residues His128 and His130 each contribute to the Zn(2+) site. The active-site Proton donor/acceptor is Glu157. Residue His213 participates in Zn(2+) binding.

The protein belongs to the aldolase class II family. MtnB subfamily. It depends on Zn(2+) as a cofactor.

It localises to the cytoplasm. The enzyme catalyses 5-(methylsulfanyl)-D-ribulose 1-phosphate = 5-methylsulfanyl-2,3-dioxopentyl phosphate + H2O. Its pathway is amino-acid biosynthesis; L-methionine biosynthesis via salvage pathway; L-methionine from S-methyl-5-thio-alpha-D-ribose 1-phosphate: step 2/6. Catalyzes the dehydration of methylthioribulose-1-phosphate (MTRu-1-P) into 2,3-diketo-5-methylthiopentyl-1-phosphate (DK-MTP-1-P). The sequence is that of Methylthioribulose-1-phosphate dehydratase from Talaromyces stipitatus (strain ATCC 10500 / CBS 375.48 / QM 6759 / NRRL 1006) (Penicillium stipitatum).